Consider the following 227-residue polypeptide: Cytidylate kinase (227 aa).

Position 12–20 (12–20 (GPSGAGKGT)) interacts with ATP.

This sequence belongs to the cytidylate kinase family. Type 1 subfamily.

The protein localises to the cytoplasm. The enzyme catalyses CMP + ATP = CDP + ADP. It catalyses the reaction dCMP + ATP = dCDP + ADP. This chain is Cytidylate kinase, found in Xanthomonas euvesicatoria pv. vesicatoria (strain 85-10) (Xanthomonas campestris pv. vesicatoria).